Reading from the N-terminus, the 552-residue chain is DNA ligase (552 aa).

An ATP-binding site is contributed by E229. Catalysis depends on K231, which acts as the N6-AMP-lysine intermediate. R236 and E283 together coordinate ATP. 2 residues coordinate Mg(2+): E283 and E377. 2 residues coordinate ATP: K382 and K397.

The protein belongs to the ATP-dependent DNA ligase family. Interacts with host TOP2A and TOP2B. The cofactor is Mg(2+).

It localises to the host cytoplasm. The catalysed reaction is ATP + (deoxyribonucleotide)n-3'-hydroxyl + 5'-phospho-(deoxyribonucleotide)m = (deoxyribonucleotide)n+m + AMP + diphosphate.. Its function is as follows. DNA ligase that seals nicks in double-stranded DNA during DNA replication, DNA recombination and DNA repair. Recruits cellular topoisomerase II to sites of viral replication and assembly. In Vaccinia virus (strain Copenhagen) (VACV), this protein is DNA ligase (OPG180).